Reading from the N-terminus, the 547-residue chain is Mucin-13 (547 aa).

The segment covering 1–210 (MSQSSGGTST…TVTSSSSTGS (210 aa)) has biased composition (low complexity). A disordered region spans residues 1–218 (MSQSSGGTST…GSNDPCNSNP (218 aa)). The 40-residue stretch at 210-249 (SNDPCNSNPCKSPASCVKLYDSYFCLCLEGYYYNNSSSCV) folds into the EGF-like 1 domain. Disulfide bonds link cysteine 214/cysteine 225, cysteine 219/cysteine 234, and cysteine 236/cysteine 248. 3 N-linked (GlcNAc...) asparagine glycosylation sites follow: asparagine 243, asparagine 244, and asparagine 263. Residues 250-366 (KGTTFPGEIG…ERYFQQDRCD (117 aa)) form the SEA domain. EGF-like domains are found at residues 361-401 (QQDR…PFCV) and 401-441 (VAPT…GKCE). Intrachain disulfides connect cysteine 365–cysteine 378, cysteine 370–cysteine 384, cysteine 386–cysteine 400, cysteine 409–cysteine 427, and cysteine 429–cysteine 440. A helical transmembrane segment spans residues 459–479 (ILTIVGTIAGAFILILLIVFI). Topologically, residues 480–547 (VSMRSKNKKK…NHRSMPRPDY (68 aa)) are cytoplasmic. The segment at 525–547 (KTGVPSQTSNPYANHRSMPRPDY) is disordered.

Homodimer of beta subunits. Cleaved into two subunits, alpha and beta, probably between the first EGF domain and the SEA domain. Beta subunit contains the cytoplasmic tail and alpha subunit the extracellular tail. The homooligomerization into dimers is dependent on intrachain disulfide bonds. In terms of processing, highly glycosylated.

The protein resides in the cell membrane. Its subcellular location is the secreted. Functionally, epithelial and hemopoietic transmembrane mucin that may play a role in cell signaling. In Rattus norvegicus (Rat), this protein is Mucin-13 (Muc13).